The following is a 440-amino-acid chain: MKLFGTDGVRGKAGEFLTPFLAMKLAMSFGECLPKKTGKILVGKDTRRSGYMIENALVSGLTAIGYDVIQIGPMPTPAIAFLTEDMRCDGGIMISASHNPYYDNGIKFFDSFGNKLSQEFEEKIEKRYFENNFNLKTEKEIGKSKRIDDVIGRYIVHIKSSFPKHVNLNGMRIVLDTANGAAYKVAPTIFTELGADVITINDEPDGFNINQNAGAMHPEFLAKKVLEYRADIGFALDGDADRLVVVDEKGEIVNGDKLLGALAYYLHKQNKLKNNGVAVTVMSNGALEKFLNDMGIKVYRSNVGDKYVLEVMKEKDLNFGGEQSGHIIFSDYAKTGDGLVSALQAVAYLIQSGKKASEAFDLFELYPQIQANIQVSSKPPLNEIEGAKELLDEVEKEGYRHLVRYSGTENKLRLLVEGESENKAKELLVKLKEFFKSKLS.

The Phosphoserine intermediate role is filled by S97. Residues S97, D237, D239, and D241 each coordinate Mg(2+). S97 carries the post-translational modification Phosphoserine.

The protein belongs to the phosphohexose mutase family. It depends on Mg(2+) as a cofactor. Activated by phosphorylation.

It carries out the reaction alpha-D-glucosamine 1-phosphate = D-glucosamine 6-phosphate. Functionally, catalyzes the conversion of glucosamine-6-phosphate to glucosamine-1-phosphate. The sequence is that of Phosphoglucosamine mutase from Nautilia profundicola (strain ATCC BAA-1463 / DSM 18972 / AmH).